A 146-amino-acid chain; its full sequence is Extracellular globin-2A (146 aa).

Residues 4–146 form the Globin domain; that stretch reads HCGPLQRLKV…EVIYPGIKHD (143 aa). A disulfide bridge links C5 with C134. Residue H97 coordinates heme b.

Belongs to the globin family. In terms of assembly, disulfide bonded trimer of chains IIA, IIB, and IIC.

The sequence is that of Extracellular globin-2A from Tylorrhynchus heterochetus (Japanese palolo worm).